The sequence spans 930 residues: Protein translocase subunit SecA (930 aa).

ATP-binding positions include Gln-87, 105–109 (GEGKT), and Asp-515. Zn(2+) is bound by residues Cys-914, Cys-916, Cys-925, and His-926.

It belongs to the SecA family. Monomer and homodimer. Part of the essential Sec protein translocation apparatus which comprises SecA, SecYEG and auxiliary proteins SecDF-YajC and YidC. It depends on Zn(2+) as a cofactor.

It is found in the cell inner membrane. The protein resides in the cytoplasm. The catalysed reaction is ATP + H2O + cellular proteinSide 1 = ADP + phosphate + cellular proteinSide 2.. In terms of biological role, part of the Sec protein translocase complex. Interacts with the SecYEG preprotein conducting channel. Has a central role in coupling the hydrolysis of ATP to the transfer of proteins into and across the cell membrane, serving both as a receptor for the preprotein-SecB complex and as an ATP-driven molecular motor driving the stepwise translocation of polypeptide chains across the membrane. The polypeptide is Protein translocase subunit SecA (Burkholderia vietnamiensis (strain G4 / LMG 22486) (Burkholderia cepacia (strain R1808))).